A 455-amino-acid chain; its full sequence is Oxysterols receptor LXR-beta (455 aa).

The span at 1 to 10 (MSTPTTNSVD) shows a compositional bias: polar residues. The tract at residues 1 to 53 (MSTPTTNSVDTPLPGNGPSTPSSSPGGKEDGPEPCPGGADPDVPSTDGADSAS) is disordered. The tract at residues 1–80 (MSTPTTNSVD…GPAPKMLGDE (80 aa)) is transactivation AF-1; required for ligand-independent transactivation function. A compositionally biased stretch (low complexity) spans 14–26 (PGNGPSTPSSSPG). Residues 79-156 (DELCQVCGDT…AGMREQCVLS (78 aa)) constitute a DNA-binding region (nuclear receptor). NR C4-type zinc fingers lie at residues 82–102 (CQVC…CEGC) and 120–144 (CRGG…LRKC). Residues 164-210 (KIRKQQQQQQQQSSPTGPGVSSSSPASGPGASPGGSDGGGQGSGEGE) form a disordered region. A compositionally biased stretch (low complexity) spans 168 to 193 (QQQQQQQQSSPTGPGVSSSSPASGPG). Residues 194–210 (ASPGGSDGGGQGSGEGE) show a composition bias toward gly residues. The tract at residues 214 to 455 (LTAAQELMIQ…LLSEIWDVHE (242 aa)) is transactivation AF-2; required for ligand-dependent transactivation function; mediates interaction with CCAR2. Positions 217–455 (AQELMIQQLV…LLSEIWDVHE (239 aa)) constitute an NR LBD domain. Glycyl lysine isopeptide (Lys-Gly) (interchain with G-Cter in SUMO2) cross-links involve residues Lys404 and Lys442.

This sequence belongs to the nuclear hormone receptor family. NR1 subfamily. As to quaternary structure, forms a heterodimer with RXR. Interacts with CCAR2 (via N-terminus) in a ligand-independent manner. Interacts (when sumoylated) with GPS2; interaction with GPS2 onto hepatic acute phase protein promoters prevents N-Cor corepressor complex dissociation. Interacts with ABCA12 and ABCA1; this interaction is required for ABCA1 localization to the cell surface and is necessary for its normal activity and stability. Sumoylated by SUMO2 at Lys-404 and Lys-442 during the hepatic acute phase response, leading to promote interaction with GPS2 and prevent N-Cor corepressor complex dissociation.

Its subcellular location is the nucleus. Nuclear receptor that exhibits a ligand-dependent transcriptional activation activity. Binds preferentially to double-stranded oligonucleotide direct repeats having the consensus half-site sequence 5'-AGGTCA-3' and 4-nt spacing (DR-4). Regulates cholesterol uptake through MYLIP-dependent ubiquitination of LDLR, VLDLR and LRP8; DLDLR and LRP8. Interplays functionally with RORA for the regulation of genes involved in liver metabolism. Induces LPCAT3-dependent phospholipid remodeling in endoplasmic reticulum (ER) membranes of hepatocytes, driving SREBF1 processing and lipogenesis. Via LPCAT3, triggers the incorporation of arachidonate into phosphatidylcholines of ER membranes, increasing membrane dynamics and enabling triacylglycerols transfer to nascent very low-density lipoprotein (VLDL) particles. Via LPCAT3 also counteracts lipid-induced ER stress response and inflammation, likely by modulating SRC kinase membrane compartmentalization and limiting the synthesis of lipid inflammatory mediators. Plays an anti-inflammatory role during the hepatic acute phase response by acting as a corepressor: inhibits the hepatic acute phase response by preventing dissociation of the N-Cor corepressor complex. In Bos taurus (Bovine), this protein is Oxysterols receptor LXR-beta (NR1H2).